The sequence spans 650 residues: Acetyl-coenzyme A synthetase (650 aa).

CoA is bound by residues 191–194 (RGGR), Thr-311, and Asn-335. Residues 387-389 (GEP), 411-416 (DTWWQT), Asp-500, and Arg-515 each bind ATP. Ser-523 is a CoA binding site. Arg-526 is an ATP binding site. Mg(2+) contacts are provided by Val-537, His-539, and Val-542. Arg-584 contacts CoA. Lys-609 bears the N6-acetyllysine mark.

Belongs to the ATP-dependent AMP-binding enzyme family. Mg(2+) serves as cofactor. Post-translationally, acetylated. Deacetylation by the SIR2-homolog deacetylase activates the enzyme.

It catalyses the reaction acetate + ATP + CoA = acetyl-CoA + AMP + diphosphate. Its function is as follows. Catalyzes the conversion of acetate into acetyl-CoA (AcCoA), an essential intermediate at the junction of anabolic and catabolic pathways. AcsA undergoes a two-step reaction. In the first half reaction, AcsA combines acetate with ATP to form acetyl-adenylate (AcAMP) intermediate. In the second half reaction, it can then transfer the acetyl group from AcAMP to the sulfhydryl group of CoA, forming the product AcCoA. The sequence is that of Acetyl-coenzyme A synthetase from Shewanella putrefaciens (strain CN-32 / ATCC BAA-453).